A 364-amino-acid chain; its full sequence is Putative zinc metalloprotease all3971 (364 aa).

Histidine 17 serves as a coordination point for Zn(2+). Residue glutamate 18 is part of the active site. Histidine 21 is a binding site for Zn(2+). 3 helical membrane passes run 92 to 114 (AIVI…LAQV), 281 to 303 (LFFF…LPAL), and 329 to 346 (VMQT…FLIV). A PDZ domain is found at 103–188 (LIFAYMLLLA…KSIQLTVARG (86 aa)).

Belongs to the peptidase M50B family. The cofactor is Zn(2+).

Its subcellular location is the cell inner membrane. This is Putative zinc metalloprotease all3971 from Nostoc sp. (strain PCC 7120 / SAG 25.82 / UTEX 2576).